A 548-amino-acid chain; its full sequence is Chaperonin GroEL (548 aa).

ATP is bound by residues 30–33 (TLGP), Lys-51, 87–91 (DGTTT), Gly-415, 479–481 (NAA), and Asp-495.

It belongs to the chaperonin (HSP60) family. In terms of assembly, forms a cylinder of 14 subunits composed of two heptameric rings stacked back-to-back. Interacts with the co-chaperonin GroES.

The protein localises to the cytoplasm. The enzyme catalyses ATP + H2O + a folded polypeptide = ADP + phosphate + an unfolded polypeptide.. Its function is as follows. Together with its co-chaperonin GroES, plays an essential role in assisting protein folding. The GroEL-GroES system forms a nano-cage that allows encapsulation of the non-native substrate proteins and provides a physical environment optimized to promote and accelerate protein folding. The polypeptide is Chaperonin GroEL (Pectobacterium carotovorum subsp. carotovorum (strain PC1)).